Here is a 111-residue protein sequence, read N- to C-terminus: Disintegrin acostatin-alpha (111 aa).

A signal peptide spans 1–20 (MIQVLLVTLCLAVFPYQGSS). Positions 21-46 (IILESGNVNDYEVVYPRKVTALPKGA) are excised as a propeptide. Residues 47–111 (IQPKNPCCDA…GDCPRKHFYA (65 aa)) enclose the Disintegrin domain. Glutamine 48 bears the Pyrrolidone carboxylic acid; in Disintegrin acostatin-alpha, processed form mark. 4 disulfides stabilise this stretch: cysteine 53-cysteine 76, cysteine 67-cysteine 73, cysteine 72-cysteine 97, and cysteine 85-cysteine 104. The Cell attachment site motif lies at 89 to 91 (RGD). Residues 110 to 111 (YA) constitute a propeptide that is removed on maturation.

Belongs to the disintegrin family. Dimeric disintegrin subfamily. Heterodimer with subunit beta; disulfide-linked. In terms of tissue distribution, expressed by the venom gland.

It localises to the secreted. Its function is as follows. Inhibits fibrinogen interaction with platelets. Acts by binding to alpha-IIb/beta-3 (ITGA2B/ITGB3) on the platelet surface and inhibits ADP-induced platelet aggregation in human platelet-rich plasma. In Agkistrodon contortrix contortrix (Southern copperhead), this protein is Disintegrin acostatin-alpha.